Here is a 461-residue protein sequence, read N- to C-terminus: CASP-like protein 4U1 (461 aa).

The segment at 1–239 is disordered; sequence MASTPRTPAP…RAAETKLPLS (239 aa). Residues 1–314 are Cytoplasmic-facing; sequence MASTPRTPAP…AAVAVGERRE (314 aa). A compositionally biased stretch (pro residues) spans 7–69; it reads TPAPVRSPPP…PLETPPPPSP (63 aa). Composition is skewed to low complexity over residues 116 to 126 and 135 to 155; these read LSPMRLAAPRL and TPTG…AAAG. Residues 193-204 show a composition bias toward pro residues; it reads SPSPSPTPPSPL. The segment covering 205 to 221 has biased composition (low complexity); sequence TPAAAPVVNNNSNNKNN. Residues 315 to 335 form a helical membrane-spanning segment; it reads LSVTLRLATAVLSLAAFSVIA. The Extracellular segment spans residues 336–354; that stretch reads SARTSGWAGDYYAHHLQYR. The chain crosses the membrane as a helical span at residues 355 to 375; the sequence is YAVAVNVIVCAYSIAQSFGEI. The Cytoplasmic segment spans residues 376-392; sequence RRLISPRFIFRSMSSYY. The helical transmembrane segment at 393–413 threads the bilayer; sequence CSLFLDQALAYLLMSASSAAA. Residues 414-431 are Extracellular-facing; it reads SRNDLWVSRFGTDAFNRK. A helical membrane pass occupies residues 432 to 452; sequence ITSALWLSFIAFLMLALNALI. At 453 to 461 the chain is on the cytoplasmic side; sequence STANLFSML.

The protein belongs to the Casparian strip membrane proteins (CASP) family. Homodimer and heterodimers.

Its subcellular location is the cell membrane. The protein is CASP-like protein 4U1 of Sorghum bicolor (Sorghum).